A 33-amino-acid chain; its full sequence is Dermonecrotic toxin LbSicTox-alphaIB1b (33 aa).

Residue H11 is part of the active site. 2 residues coordinate Mg(2+): E31 and D33.

The protein belongs to the arthropod phospholipase D family. Class II subfamily. It depends on Mg(2+) as a cofactor. In terms of processing, contains 2 disulfide bonds. As to expression, expressed by the venom gland.

It localises to the secreted. The catalysed reaction is an N-(acyl)-sphingosylphosphocholine = an N-(acyl)-sphingosyl-1,3-cyclic phosphate + choline. It carries out the reaction an N-(acyl)-sphingosylphosphoethanolamine = an N-(acyl)-sphingosyl-1,3-cyclic phosphate + ethanolamine. It catalyses the reaction a 1-acyl-sn-glycero-3-phosphocholine = a 1-acyl-sn-glycero-2,3-cyclic phosphate + choline. The enzyme catalyses a 1-acyl-sn-glycero-3-phosphoethanolamine = a 1-acyl-sn-glycero-2,3-cyclic phosphate + ethanolamine. Functionally, dermonecrotic toxins cleave the phosphodiester linkage between the phosphate and headgroup of certain phospholipids (sphingolipid and lysolipid substrates), forming an alcohol (often choline) and a cyclic phosphate. This toxin acts on sphingomyelin (SM) with high activity (9.5 U/mg). It may also act on ceramide phosphoethanolamine (CPE), lysophosphatidylcholine (LPC) and lysophosphatidylethanolamine (LPE), but not on lysophosphatidylserine (LPS), and lysophosphatidylglycerol (LPG). It acts by transphosphatidylation, releasing exclusively cyclic phosphate products as second products. Induces dermonecrosis, hemolysis, increased vascular permeability, edema, inflammatory response, and platelet aggregation. The sequence is that of Dermonecrotic toxin LbSicTox-alphaIB1b from Loxosceles boneti (North American fiddleback spider).